A 567-amino-acid polypeptide reads, in one-letter code: Hexose transporter HXT9 (567 aa).

The span at 1–16 (MSGVNNTSANDLSTTE) shows a compositional bias: polar residues. The interval 1 to 45 (MSGVNNTSANDLSTTESNSNSVANAPSVKTEHNDSKNSLNLDATE) is disordered. At 1–56 (MSGVNNTSANDLSTTESNSNSVANAPSVKTEHNDSKNSLNLDATEPPIDLPQKPLS) the chain is on the cytoplasmic side. Residues 17-28 (SNSNSVANAPSV) are compositionally biased toward low complexity. The helical transmembrane segment at 57–77 (AYTTVAILCLMIAFGGFIFGW) threads the bilayer. The Extracellular segment spans residues 78–112 (DTGTISGFVNLSDFIRRFGQKNDKGTYYLSKVRMG). Asparagine 87 carries an N-linked (GlcNAc...) asparagine glycan. A helical membrane pass occupies residues 113–133 (LIVSIFNIGCAIGGIVLSKVG). At 134–139 (DIYGRR) the chain is on the cytoplasmic side. Residues 140 to 160 (IGLITVTAIYVVGILIQITSI) form a helical membrane-spanning segment. Topologically, residues 161 to 170 (NKWYQYFIGR) are extracellular. The chain crosses the membrane as a helical span at residues 171 to 191 (IISGLGVGGIAVLSPMLISEV). At 192–197 (APKQIR) the chain is on the cytoplasmic side. A helical membrane pass occupies residues 198-218 (GTLVQLYQLMCTMGIFLGYCT). Residues 219-232 (NYGTKNYHNATQWR) lie on the Extracellular side of the membrane. Asparagine 227 carries N-linked (GlcNAc...) asparagine glycosylation. Residues 233–253 (VGLGLCFAWTTFMVSGMMFVP) form a helical membrane-spanning segment. Residues 254–336 (ESPRYLIEVG…IQSLQQLTGD (83 aa)) are Cytoplasmic-facing. A helical transmembrane segment spans residues 337 to 353 (NYFFYYGTTIFKSVGLK). The Extracellular segment spans residues 354 to 359 (DSFQTS). The chain crosses the membrane as a helical span at residues 360-377 (IIIGVVNFFSSFIAVYTI). The Cytoplasmic portion of the chain corresponds to 378 to 384 (ERFGRRT). Residues 385–405 (CLLWGAASMLCCFAVFASVGV) form a helical membrane-spanning segment. At 406 to 429 (TKLWPQGSSHQDITSQGAGNCMIV) the chain is on the extracellular side. The chain crosses the membrane as a helical span at residues 430-450 (FTMFFIFSFATTWAGGCYVIV). Topologically, residues 451 to 467 (SETFPLRVKSRGMAIAT) are cytoplasmic. The chain crosses the membrane as a helical span at residues 468–488 (AANWMWGFLISFFTPFITGAI). Asparagine 489 is a topological domain (extracellular). A helical transmembrane segment spans residues 490–510 (FYYGYVFLGCLVFAYFYVFFF). The Cytoplasmic segment spans residues 511–567 (VPETKGLTLEEVNTMWLEGVPAWKSASWVPPERRTADYDADAIDHDDRPIYKRFFSS).

Belongs to the major facilitator superfamily. Sugar transporter (TC 2.A.1.1) family.

It localises to the membrane. In terms of biological role, probable glucose transporter. The protein is Hexose transporter HXT9 (HXT9) of Saccharomyces cerevisiae (strain ATCC 204508 / S288c) (Baker's yeast).